The chain runs to 471 residues: Histidinol dehydrogenase (471 aa).

NAD(+) is bound by residues Tyr139, Gln204, and Asn236. Substrate is bound by residues Thr259, Gln281, and His284. Zn(2+) is bound by residues Gln281 and His284. Catalysis depends on proton acceptor residues Glu350 and His351. His351, Asp384, Glu438, and His443 together coordinate substrate. Asp384 contributes to the Zn(2+) binding site. A Zn(2+)-binding site is contributed by His443.

The protein belongs to the histidinol dehydrogenase family. Zn(2+) is required as a cofactor.

The enzyme catalyses L-histidinol + 2 NAD(+) + H2O = L-histidine + 2 NADH + 3 H(+). It participates in amino-acid biosynthesis; L-histidine biosynthesis; L-histidine from 5-phospho-alpha-D-ribose 1-diphosphate: step 9/9. Its function is as follows. Catalyzes the sequential NAD-dependent oxidations of L-histidinol to L-histidinaldehyde and then to L-histidine. This chain is Histidinol dehydrogenase, found in Bifidobacterium longum (strain NCC 2705).